A 153-amino-acid polypeptide reads, in one-letter code: Endoribonuclease YbeY (153 aa).

Positions 116, 120, and 126 each coordinate Zn(2+).

This sequence belongs to the endoribonuclease YbeY family. Zn(2+) is required as a cofactor.

The protein localises to the cytoplasm. Its function is as follows. Single strand-specific metallo-endoribonuclease involved in late-stage 70S ribosome quality control and in maturation of the 3' terminus of the 16S rRNA. This chain is Endoribonuclease YbeY, found in Clavibacter sepedonicus (Clavibacter michiganensis subsp. sepedonicus).